The primary structure comprises 199 residues: Twist-related protein (199 aa).

A disordered region spans residues 1 to 43; it reads MQEHQLSRVTSGNKKKYQSFDDESRDEKRMKCDSTDKLESNSN. Over residues 25 to 39 the composition is skewed to basic and acidic residues; it reads RDEKRMKCDSTDKLE. A bHLH domain is found at 51-102; the sequence is THRVIANIRERQRTQALNQSFSTLRKIIPTLPSDKLSKIQTLRLAAMYIDFL.

As to quaternary structure, efficient DNA binding requires dimerization with another bHLH protein. Homodimer. In terms of tissue distribution, expression is seen at the point of medusa formation in the ectodermal and endodermal bud tissues, and in the entocodon which gives rise to all smooth and striated muscle cells. After the subumbrellar plate differentiates from the endoderm, strong expression is detected until the medusa detaches from the gonzoid. Expression is observed in the distal part of the medusa but diminishes in entocodon-derived muscles as the tissues differentiate, with expression disappearing completely after stage 8. In later stages expression is seen in the distal and proximal parts of the bud and depending on state of maturity, in the developing gonadal tissue.

It is found in the nucleus. Functionally, probable transcription factor, which may be responsible for the formation of myoepithelial cells in early muscle development in larva and the formation of non-muscle tissues in later bud stages and mesoderm-like structures in the medusa. The polypeptide is Twist-related protein (Podocoryna carnea (Hydrozoan)).